Reading from the N-terminus, the 902-residue chain is DNA mismatch repair protein MutS (902 aa).

654-661 serves as a coordination point for ATP; that stretch reads GPNMGGKS.

The protein belongs to the DNA mismatch repair MutS family.

Its function is as follows. This protein is involved in the repair of mismatches in DNA. It is possible that it carries out the mismatch recognition step. This protein has a weak ATPase activity. The polypeptide is DNA mismatch repair protein MutS (Xanthomonas axonopodis pv. citri (strain 306)).